Reading from the N-terminus, the 881-residue chain is Serine/threonine-protein kinase greatwall (881 aa).

Residues 1–20 form a disordered region; that stretch reads MSTVEPLSDEGVAAGPRRIE. The Protein kinase domain maps to 30 to 837; sequence FTIVKPISRG…LKELKHHPLF (808 aa). ATP is bound by residues 36–44 and Lys57; that span reads ISRGAFGKV. The active-site Proton acceptor is the Asp151. Disordered regions lie at residues 310–345 and 706–732; these read SPRL…VLNS and ITPL…RRGA. A compositionally biased stretch (basic and acidic residues) spans 312 to 321; the sequence is RLEKDVKQTE. A Phosphothreonine; by CDK1 modification is found at Thr743. Residues 838–881 form the AGC-kinase C-terminal domain; it reads HGVDWDNLQNQPMPFIPQPDDETDTSYFEARNNAQHLTVSGFSL.

It belongs to the protein kinase superfamily. AGC Ser/Thr protein kinase family. Phosphorylation at Thr-743 by CDK1 during M phase activates its kinase activity. Maximum phosphorylation occurs in prometaphase.

The protein resides in the cytoplasm. It is found in the cytoskeleton. Its subcellular location is the microtubule organizing center. The protein localises to the centrosome. It localises to the nucleus. The catalysed reaction is L-seryl-[protein] + ATP = O-phospho-L-seryl-[protein] + ADP + H(+). It catalyses the reaction L-threonyl-[protein] + ATP = O-phospho-L-threonyl-[protein] + ADP + H(+). Serine/threonine kinase that plays a key role in M phase by acting as a regulator of mitosis entry and maintenance. Acts by promoting the inactivation of protein phosphatase 2A (PP2A) during M phase: does not directly inhibit PP2A but acts by mediating phosphorylation and subsequent activation of ARPP19 and ENSA at 'Ser-62' and 'Ser-67', respectively. ARPP19 and ENSA are phosphatase inhibitors that specifically inhibit the PPP2R2D (PR55-delta) subunit of PP2A. Inactivation of PP2A during M phase is essential to keep cyclin-B1-CDK1 activity high. Following DNA damage, it is also involved in checkpoint recovery by being inhibited. The chain is Serine/threonine-protein kinase greatwall (MASTL) from Gallus gallus (Chicken).